The following is a 496-amino-acid chain: Alanine aminotransferase 1 (496 aa).

N-acetylalanine is present on A2. Position 22 is a phosphothreonine (T22). An N6-(pyridoxal phosphate)lysine modification is found at K314.

The protein belongs to the class-I pyridoxal-phosphate-dependent aminotransferase family. Alanine aminotransferase subfamily. As to quaternary structure, homodimer. It depends on pyridoxal 5'-phosphate as a cofactor. Mainly expressed in liver, intestine, colon and white adipose tissue.

The protein localises to the cytoplasm. The enzyme catalyses L-alanine + 2-oxoglutarate = pyruvate + L-glutamate. It participates in amino-acid degradation; L-alanine degradation via transaminase pathway; pyruvate from L-alanine: step 1/1. Its function is as follows. Catalyzes the reversible transamination between alanine and 2-oxoglutarate to form pyruvate and glutamate. Participates in cellular nitrogen metabolism and also in liver gluconeogenesis starting with precursors transported from skeletal muscles. This is Alanine aminotransferase 1 (Gpt) from Mus musculus (Mouse).